The primary structure comprises 286 residues: Flagellin FlaB1 (286 aa).

The tract at residues 231-286 (LDIAAENLQAAESRIRDANIAKQMVEYTKNQVLTQSGTAMLAQANTSAQSILSILR) is required for interaction with FliW.

Belongs to the bacterial flagellin family. As to quaternary structure, the flagellum consists of an outer layer composed of repeating units of FlaA around a core that contains several antigenically related polypeptides. Interacts via its C-terminus with FliW; a synthetic peptide of residues 229-247 partially blocks binding to FliW.

The protein localises to the periplasmic flagellum. It localises to the periplasm. Functionally, component of the core of the flagella. The chain is Flagellin FlaB1 (flaB1) from Treponema pallidum (strain Nichols).